An 849-amino-acid polypeptide reads, in one-letter code: Putative pentatricopeptide repeat-containing protein At5g08490 (849 aa).

PPR repeat units follow at residues 20–54 (DHRV…GHIA), 55–89 (CSEV…DPVV), 121–155 (SSVT…GLEK), 156–187 (DTLV…IADK), 188–222 (DVVS…PTEP), 223–260 (NYAT…SWLQ), 262–296 (HVFV…DLVS), 297–327 (WNVV…GDVS), 329–363 (DSVT…SYLL), 365–399 (DTSV…DIIS), 400–430 (WNAI…AITL), 431–465 (DSVT…GLLH), 469–499 (EPKL…LSER), 501–531 (TLVS…MSTT), 532–566 (DLTT…GMRP), 567–597 (NTVT…IIRG), 601–631 (DIRL…DARR), 632–666 (DLVM…NIKP), 667–702 (DHVF…GMKP), and 703–733 (TMEQ…MPVE). Residues 738 to 813 (IWGTLLRACT…PAGCSWLEVD (76 aa)) form a type E motif region. Residues 814–844 (GQRNVFVSGDCSHPRRDSIFDLVNALYLQMK) form a type E(+) motif region.

It belongs to the PPR family. PCMP-E subfamily.

In Arabidopsis thaliana (Mouse-ear cress), this protein is Putative pentatricopeptide repeat-containing protein At5g08490 (PCMP-E32).